Reading from the N-terminus, the 223-residue chain is MLGLGRVFSSAVRPRTLIRAPINKRSFLWYSTEAAKEEKPAEEKVAETENVDVKELQSKLSELKSKYEAKDKEVAELKGSIRQSLADYRNLENRMKRDMEQTRAFAVQKLTKDLLDSVDNLERALSIVPEEKRNNRESNKDLVDLYEGLAMTESNLMKTLGKYGLVRYDGIGEDFDPNIHEAVFQIPVEGKKPNTVFHCESKGFQLNGRVIRPAKVGVVKGDD.

The protein belongs to the GrpE family. As to quaternary structure, component of the PAM complex, at least composed of mtHsp70, mge1, tim44, pam16, pam17 and pam18.

It localises to the mitochondrion matrix. In terms of biological role, essential component of the PAM complex, a complex required for the translocation of transit peptide-containing proteins from the inner membrane into the mitochondrial matrix in an ATP-dependent manner. Seems to control the nucleotide-dependent binding of ssc1 to substrate proteins. The protein is GrpE protein homolog, mitochondrial (mge1) of Schizosaccharomyces pombe (strain 972 / ATCC 24843) (Fission yeast).